Consider the following 105-residue polypeptide: Cysteine-rich venom protein VAR2 (105 aa).

A signal peptide spans 1 to 22 (MILLKLYLTLAAILCQSRGTTS).

It belongs to the CRISP family. Post-translationally, contains 8 disulfide bonds. As to expression, expressed by the venom gland.

Its subcellular location is the secreted. Its function is as follows. Blocks ryanodine receptors, and potassium channels. This is Cysteine-rich venom protein VAR2 from Varanus acanthurus (Ridge-tailed monitor).